The chain runs to 459 residues: MVGSVAGNMLLRAAWRRASLAATSLALGRSSVPTRGLRLRVVDHGPHSPVHSEAEAVLRPLYMDVQATTPLDPRVLDAMLPYLVNYYGNPHSRTHAYGWESEAAMERARQQVASLIGADPREIIFTSGATESNNIAIKGVARFYRSRKKHLVTTQTEHKCVLDSCRSLEAEGFRVTYLPVQKSGIIDLKELEAAIQPDTSLVSVMTVNNEIGVKQPIAEIGQICSSRKVYFHTDAAQAVGKIPLDVNDMKIDLMSISGHKLYGPKGVGAIYIRRRPRVRVEALQSGGGQERGMRSGTVPTPLVVGLGAACELAQQEMEYDHKRISKLAERLVQNIMKNLPDVVMNGDPKQHYPGCINLSFAYVEGESLLMALKDVALSSGSACTSASLEPSYVLRAIGTDEDLAHSSIRFGIGRFTTEEEVDYTAEKCIHHVKRLREMSPLWEMVQDGIDLKSIKWTQH.

Residues 1–17 (MVGSVAGNMLLRAAWRR) constitute a mitochondrion transit peptide. Positions 129, 130, 237, 257, and 259 each coordinate pyridoxal 5'-phosphate. The residue at position 260 (K260) is an N6-(pyridoxal phosphate)lysine. T297 provides a ligand contact to pyridoxal 5'-phosphate. C383 acts as the Cysteine persulfide intermediate in catalysis. C383 is a binding site for [2Fe-2S] cluster. C383 is a binding site for Zn(2+). Cysteine persulfide is present on C383.

This sequence belongs to the class-V pyridoxal-phosphate-dependent aminotransferase family. NifS/IscS subfamily. Homodimer. Component of the mitochondrial core iron-sulfur cluster (ISC) complex composed of NFS1, LYRM4, NDUFAB1, ISCU, FXN, and FDX2; this complex is a heterohexamer containing two copies of each monomer. Component of cyteine desulfurase complex composed of NFS1, LYRM4 and NDUFAB1; this complex contributes to the activation of cysteine desulfurase activity and NFS1 stabilization. Interacts (homodimer form) with ISCU (D-state); each monomer interacts with the C-terminal regions of each NFS1 monomer. Interacts with HSPA9. Interacts (via homodimer form) with FDX2. Interacts (via homodimer form) with FXN. Interacts with LYRM4. Component of a complex composed of FXN, NFS1, LYRM4 and ISCU. Requires pyridoxal 5'-phosphate as cofactor. In terms of processing, N-gluconoylated. Post-translationally, cysteine persulfide intermediate is reduced by thiol-containing molecules like glutathione and L-cysteine. Persulfide reduction is a rate-limiting step of cysteine desulfurase catalytic cycle. In terms of tissue distribution, ubiquitous.

The protein resides in the mitochondrion. The catalysed reaction is (sulfur carrier)-H + L-cysteine = (sulfur carrier)-SH + L-alanine. It carries out the reaction L-cysteinyl-[cysteine desulfurase] + L-cysteine = S-sulfanyl-L-cysteinyl-[cysteine desulfurase] + L-alanine. Its activity is regulated as follows. Active only in complex with LYRM4. Mitochondrial cysteine desulfurase, of the core iron-sulfur cluster (ISC) assembly complex, that catalyzes the desulfuration of L-cysteine to L-alanine, as component of the cysteine desulfurase complex, leading to the formation of a cysteine persulfide intermediate at the active site cysteine residue and participates in the [2Fe-2S] clusters assembly on the scaffolding protein ISCU. The persulfide is then transferred on the flexible Cys loop from the catalytic site of NFS1 to the surface of NFS1. After the NFS1-linked persulfide sulfur is transferred to one of the conserved Cys residues of the scaffold, a reaction assisted by FXN. The core iron-sulfur cluster (ISC) assembly complex is involved in the de novo synthesis of a [2Fe-2S] cluster, the first step of the mitochondrial iron-sulfur protein biogenesis. This process is initiated by the cysteine desulfurase complex (NFS1:LYRM4:NDUFAB1) that produces persulfide which is delivered on the scaffold protein ISCU in a FXN-dependent manner. Then this complex is stabilized by FDX2 which provides reducing equivalents to accomplish the [2Fe-2S] cluster assembly. Finally, the [2Fe-2S] cluster is transferred from ISCU to chaperone proteins, including HSCB, HSPA9 and GLRX5. The polypeptide is Cysteine desulfurase (Mus musculus (Mouse)).